The chain runs to 314 residues: Phosphoribosylaminoimidazole-succinocarboxamide synthase (314 aa).

The protein belongs to the SAICAR synthetase family.

It catalyses the reaction 5-amino-1-(5-phospho-D-ribosyl)imidazole-4-carboxylate + L-aspartate + ATP = (2S)-2-[5-amino-1-(5-phospho-beta-D-ribosyl)imidazole-4-carboxamido]succinate + ADP + phosphate + 2 H(+). It functions in the pathway purine metabolism; IMP biosynthesis via de novo pathway; 5-amino-1-(5-phospho-D-ribosyl)imidazole-4-carboxamide from 5-amino-1-(5-phospho-D-ribosyl)imidazole-4-carboxylate: step 1/2. The protein is Phosphoribosylaminoimidazole-succinocarboxamide synthase of Bacteroides thetaiotaomicron (strain ATCC 29148 / DSM 2079 / JCM 5827 / CCUG 10774 / NCTC 10582 / VPI-5482 / E50).